The primary structure comprises 467 residues: tRNA(Ile)-lysidine synthase (467 aa).

35 to 40 lines the ATP pocket; the sequence is SGGPDS.

The protein belongs to the tRNA(Ile)-lysidine synthase family.

The protein localises to the cytoplasm. The enzyme catalyses cytidine(34) in tRNA(Ile2) + L-lysine + ATP = lysidine(34) in tRNA(Ile2) + AMP + diphosphate + H(+). Functionally, ligates lysine onto the cytidine present at position 34 of the AUA codon-specific tRNA(Ile) that contains the anticodon CAU, in an ATP-dependent manner. Cytidine is converted to lysidine, thus changing the amino acid specificity of the tRNA from methionine to isoleucine. The protein is tRNA(Ile)-lysidine synthase of Caldanaerobacter subterraneus subsp. tengcongensis (strain DSM 15242 / JCM 11007 / NBRC 100824 / MB4) (Thermoanaerobacter tengcongensis).